A 471-amino-acid chain; its full sequence is Uronate isomerase (471 aa).

This sequence belongs to the metallo-dependent hydrolases superfamily. Uronate isomerase family.

It carries out the reaction D-glucuronate = D-fructuronate. It catalyses the reaction aldehydo-D-galacturonate = keto-D-tagaturonate. It participates in carbohydrate metabolism; pentose and glucuronate interconversion. The chain is Uronate isomerase from Cellvibrio japonicus (strain Ueda107) (Pseudomonas fluorescens subsp. cellulosa).